Consider the following 570-residue polypeptide: Proline--tRNA ligase (570 aa).

Belongs to the class-II aminoacyl-tRNA synthetase family. ProS type 1 subfamily. As to quaternary structure, homodimer.

The protein resides in the cytoplasm. The catalysed reaction is tRNA(Pro) + L-proline + ATP = L-prolyl-tRNA(Pro) + AMP + diphosphate. In terms of biological role, catalyzes the attachment of proline to tRNA(Pro) in a two-step reaction: proline is first activated by ATP to form Pro-AMP and then transferred to the acceptor end of tRNA(Pro). As ProRS can inadvertently accommodate and process non-cognate amino acids such as alanine and cysteine, to avoid such errors it has two additional distinct editing activities against alanine. One activity is designated as 'pretransfer' editing and involves the tRNA(Pro)-independent hydrolysis of activated Ala-AMP. The other activity is designated 'posttransfer' editing and involves deacylation of mischarged Ala-tRNA(Pro). The misacylated Cys-tRNA(Pro) is not edited by ProRS. In Desulfotalea psychrophila (strain LSv54 / DSM 12343), this protein is Proline--tRNA ligase.